A 638-amino-acid polypeptide reads, in one-letter code: Sorting nexin-41 (638 aa).

Positions 1-14 are enriched in low complexity; sequence MDSDTSPNPFASSP. The interval 1-69 is disordered; it reads MDSDTSPNPF…MGATVPGPKP (69 aa). The span at 15-30 shows a compositional bias: pro residues; it reads PSSPSPRPSLPPPVPR. Residues 84 to 201 form the PX domain; that stretch reads GEQVHIVDAL…HRFLEEDVSW (118 aa). A 1,2-diacyl-sn-glycero-3-phospho-(1D-myo-inositol-3-phosphate) contacts are provided by Arg-118, Ser-120, Lys-144, and Arg-168. Disordered stretches follow at residues 215-239, 408-432, and 545-638; these read KNPL…SEAP, LERG…RERA, and PHPN…LGPL. The segment covering 225–239 has biased composition (low complexity); sequence PTFQPTTPTSPSEAP. Over residues 423–432 the composition is skewed to basic and acidic residues; it reads EAARDERERA. Positions 552 to 562 are enriched in low complexity; that stretch reads QTQTQVQSQQS. The span at 585–601 shows a compositional bias: basic and acidic residues; it reads MKNEIERVEIEIADKPL.

The protein belongs to the sorting nexin family.

It is found in the endosome membrane. Its subcellular location is the endomembrane system. Its function is as follows. May be required for cytoplasm to vacuole transport (Cvt) and pexophagy. This is Sorting nexin-41 (SNX41) from Cryptococcus neoformans var. neoformans serotype D (strain B-3501A) (Filobasidiella neoformans).